We begin with the raw amino-acid sequence, 423 residues long: Transcription factor bHLH14 (423 aa).

The disordered stretch occupies residues 192–243 (GKTTKHTNQTGSYPKPAVSDHSKSGNQQFGSERKRRRKLETTRVAAATKEKH). Residues 245-294 (PAVLSHVEAEKQRREKLNHRFYALRAIVPKVSRMDKASLLSDAVSYIESL) enclose the bHLH domain. Positions 312–343 (ETDKLDNSSSNTSPSSVEYQVNQKPSKSNRGS) are disordered. Positions 318–327 (NSSSNTSPSS) are enriched in low complexity. Residues 328 to 342 (VEYQVNQKPSKSNRG) show a composition bias toward polar residues.

Homodimer.

It localises to the nucleus. In Arabidopsis thaliana (Mouse-ear cress), this protein is Transcription factor bHLH14 (BHLH14).